A 746-amino-acid polypeptide reads, in one-letter code: 1,4-alpha-glucan branching enzyme GlgB (746 aa).

D418 functions as the Nucleophile in the catalytic mechanism. E471 acts as the Proton donor in catalysis.

This sequence belongs to the glycosyl hydrolase 13 family. GlgB subfamily. In terms of assembly, monomer.

The catalysed reaction is Transfers a segment of a (1-&gt;4)-alpha-D-glucan chain to a primary hydroxy group in a similar glucan chain.. Its pathway is glycan biosynthesis; glycogen biosynthesis. Its function is as follows. Catalyzes the formation of the alpha-1,6-glucosidic linkages in glycogen by scission of a 1,4-alpha-linked oligosaccharide from growing alpha-1,4-glucan chains and the subsequent attachment of the oligosaccharide to the alpha-1,6 position. This chain is 1,4-alpha-glucan branching enzyme GlgB, found in Nitrosospira multiformis (strain ATCC 25196 / NCIMB 11849 / C 71).